The following is an 865-amino-acid chain: Anaphase-promoting complex subunit 6 (865 aa).

TPR repeat units lie at residues 11–42 (IEKQLKEKIENALSIHSYPTAIFFSDKLLNLV), 46–75 (SKEYVKILYILCDALYLDRQFQRSSYLIQK), and 88–149 (EDYQ…LQIL). A disordered region spans residues 153–293 (NDSSENMDDE…NNNNNNNNNF (141 aa)). The span at 183-202 (NCDDDDDDDDDDDDDDDDEK) shows a compositional bias: acidic residues. Over residues 249 to 292 (NKNNNKNNNNNNNNNNNNNNNNNNNNNNNNNNNNNNNNNNNNNN) the composition is skewed to low complexity. TPR repeat units follow at residues 300–331 (IRSSISCLKGKCYESMDNLKKAKFWYIKALLT), 336–359 (FEAFESLTKNHLLTYQEEISLLEK), 366–438 (DSWI…DIST), 478–506 (DIQTWISEYYFYRHQFQESYSITKRILKQ), 515–542 (CLMVNISSMFELQLTNELYFTCHQLVDS), 573–602 (AISWYGVACYYHLIQNSDQTQRFFTKSTTL), 607–635 (GASWLGFGHFFASKGEHDQAMAAYRTSSR), 642–670 (LPLLCIGMELIRVHNLNLASQYILQAKDI), and 675–709 (PMIFNELGIIEYKNSQYNEAIKLFETALEICKIKS). Positions 403–434 (SNNNTFGANNNNNNNNNNNNNNNNNNNNNSNN) are enriched in low complexity. Positions 403 to 436 (SNNNTFGANNNNNNNNNNNNNNNNNNNNNSNNDI) are disordered. The segment at 738 to 767 (GIGNNNNNNNNRRTTTTTTTTSNNQKKNSS) is disordered. 2 TPR repeats span residues 777-809 (ESWEPTIYNLAHCYRKLRKFELALHYYTMSLSL) and 814-843 (PSTYSALGFTHHLQGNFDEAIDYYHQSLSI).

It belongs to the APC6/CDC16 family. In terms of assembly, the APC/C is composed of at least 13 subunits that stay tightly associated throughout the cell cycle: anapc1, anapc2, anapc3, anapc4, anapc5, anapc6, anapc7, anapc8, anapc10, anapc11, cdc20, cdc26 and cdh1.

Its subcellular location is the nucleus. It functions in the pathway protein modification; protein ubiquitination. In terms of biological role, component of the anaphase promoting complex/cyclosome (APC/C), a cell cycle-regulated E3 ubiquitin-protein ligase complex that controls progression through mitosis and the G1 phase of the cell cycle. This Dictyostelium discoideum (Social amoeba) protein is Anaphase-promoting complex subunit 6 (anapc6).